Consider the following 967-residue polypeptide: Siderophore exporter MmpL4 (967 aa).

11 helical membrane-spanning segments follow: residues 26-46 (AFAV…TVFV), 210-230 (VIFI…LLLI), 242-262 (VVAV…VSLL), 303-323 (AHVI…LSFA), 333-353 (IPCA…GPAV), 384-404 (WPLP…LALP), 769-789 (WDLL…MLII), 793-813 (FIAA…SFGL), 821-841 (ILAI…LLAV), 875-895 (VVTN…VSDL), and 913-934 (TLIV…WFWW). Positions 943–967 (ARTPTVPSETQPAGRPLAMSSDRLG) are disordered.

It belongs to the resistance-nodulation-cell division (RND) (TC 2.A.6) family. MmpL subfamily. As to quaternary structure, interacts with MmpS4.

The protein localises to the cell inner membrane. Its function is as follows. Part of an export system, which is required for biosynthesis and secretion of siderophores. The sequence is that of Siderophore exporter MmpL4 (mmpL4) from Mycobacterium tuberculosis (strain CDC 1551 / Oshkosh).